Reading from the N-terminus, the 359-residue chain is Peptide chain release factor 1 (359 aa).

N5-methylglutamine is present on glutamine 236.

It belongs to the prokaryotic/mitochondrial release factor family. In terms of processing, methylated by PrmC. Methylation increases the termination efficiency of RF1.

The protein resides in the cytoplasm. Peptide chain release factor 1 directs the termination of translation in response to the peptide chain termination codons UAG and UAA. This is Peptide chain release factor 1 from Streptococcus agalactiae.